A 409-amino-acid polypeptide reads, in one-letter code: Arginine biosynthesis bifunctional protein ArgJ (409 aa).

T165, K191, T202, E282, N404, and T409 together coordinate substrate. T202 acts as the Nucleophile in catalysis.

This sequence belongs to the ArgJ family. As to quaternary structure, heterotetramer of two alpha and two beta chains.

The protein resides in the cytoplasm. The catalysed reaction is N(2)-acetyl-L-ornithine + L-glutamate = N-acetyl-L-glutamate + L-ornithine. It catalyses the reaction L-glutamate + acetyl-CoA = N-acetyl-L-glutamate + CoA + H(+). The protein operates within amino-acid biosynthesis; L-arginine biosynthesis; L-ornithine and N-acetyl-L-glutamate from L-glutamate and N(2)-acetyl-L-ornithine (cyclic): step 1/1. Its pathway is amino-acid biosynthesis; L-arginine biosynthesis; N(2)-acetyl-L-ornithine from L-glutamate: step 1/4. Its function is as follows. Catalyzes two activities which are involved in the cyclic version of arginine biosynthesis: the synthesis of N-acetylglutamate from glutamate and acetyl-CoA as the acetyl donor, and of ornithine by transacetylation between N(2)-acetylornithine and glutamate. In Parasynechococcus marenigrum (strain WH8102), this protein is Arginine biosynthesis bifunctional protein ArgJ.